A 290-amino-acid polypeptide reads, in one-letter code: Protein EURL homolog (290 aa).

The tract at residues 185–206 (SHSQAQKTEETSSGPEGTIQTQ) is disordered. Positions 228–251 (AKLQQRIQEVFEELTHQVQEKDSL) form a coiled coil.

The protein belongs to the EURL family. Interacts with CCDC85B. Expressed in brain (at protein level). Expressed in neural progenitor cells and postmitotic neurons of the embryonic cerebral cortex.

In terms of biological role, plays a role in cortical progenitor cell proliferation and differentiation. Promotes dendritic spine development of post-migratory cortical projection neurons by modulating the beta-catenin signaling pathway. This Mus musculus (Mouse) protein is Protein EURL homolog.